We begin with the raw amino-acid sequence, 1603 residues long: Gag-Pol polyprotein (1603 aa).

Residues 124–141 are compositionally biased toward basic and acidic residues; sequence KGEEVGETTAQRDAKMAP. Residues 124–144 are disordered; it reads KGEEVGETTAQRDAKMAPEKM. A PPXY motif motif is present at residues 172–175; that stretch reads PPPY. The short motif at 180–184 is the LYPX(n)L motif element; the sequence is LYPSL. The Nuclear export signal signature appears at 219–229; the sequence is LTDWARIREEL. 2 consecutive CCHC-type zinc fingers follow at residues 507-524 and 533-550; these read GLCY…QCPK and ERCQ…QCRR. A disordered region spans residues 544 to 571; it reads NAKQCRRRDGNQGQRPGKGLSSGSWPVS. A Peptidase A2 domain is found at 609-690; sequence ITALLDSGAD…VRGSILGRDC (82 aa). Asp614 (for protease activity; shared with dimeric partner) is an active-site residue. Residues 750 to 938 enclose the Reverse transcriptase domain; it reads LQLGHIEPSL…PGVQYLGYKL (189 aa). Positions 815, 890, 891, 1158, 1192, 1213, and 1272 each coordinate Mg(2+). In terms of domain architecture, RNase H type-1 spans 1149–1280; it reads PVPGPTAFTD…ADSQATFQAY (132 aa). The Integrase-type zinc-finger motif lies at 1280 to 1321; it reads YPLREAKDLHTALHIGPRALSKACNISMQQAREVVQTCPHCN. Residues His1289, His1293, Cys1317, and Cys1320 each contribute to the Zn(2+) site. Residues 1333-1496 form the Integrase catalytic domain; the sequence is RGLGPLQIWQ…TPIQKHWRPT (164 aa). Positions 1344, 1401, and 1437 each coordinate Mg(2+). Positions 1502–1550 form a DNA-binding region, integrase-type; that stretch reads PPVKIRIETGEWEKGWNVLVWGRGYAAVKNRDTDKVIWVPSRKVKPDVT. Residues 1548-1567 are involved in homooctamerization; it reads DVTQKDEVTKKDEASPLFAG. Residues 1566 to 1603 are disordered; that stretch reads AGISDWIPWEDEQEGLQGETASNKQERPGEDTLAANES.

In terms of assembly, active as a homodimer. As to quaternary structure, homodimer. Homomultimer. Homohexamer. Homodimer; further associates as a homooctamer. In terms of assembly, heterodimer of alpha and beta subunits. Three forms of RT exist: alpha-alpha (alpha-Pol), beta-beta (beta-Pol), and alpha-beta, with the major form being the heterodimer. Both the polymerase and RNase H active sites are located in the alpha subunit of heterodimeric RT alpha-beta. Mg(2+) serves as cofactor. It depends on Mn(2+) as a cofactor. In terms of processing, specific enzymatic cleavages in vivo yield mature proteins. Capsid protein p27: The cleavage at the C-terminus is slowly trimmed by the viral protease, sometimes being cut internally thereby generating the short version of the capsid protein and a capsid protein C-terminally extended by 3 amino acids in a ratio of 2:1.

Its subcellular location is the virion. The catalysed reaction is DNA(n) + a 2'-deoxyribonucleoside 5'-triphosphate = DNA(n+1) + diphosphate. The enzyme catalyses Endonucleolytic cleavage to 5'-phosphomonoester.. Its function is as follows. Capsid protein p27: Self-associates to form the irregular polyhedron core composed of hexamers and pentamers, that encapsulates the genomic RNA-nucleocapsid complex. Assembles as a tube in vitro. Binds to inositol hexakisphosphate (IP6), which allows the assembly of the polyhedral capsid. Functionally, spacer peptide: Plays a role in the oligomerization of the Gag polyprotein and in the stabilization of the immature particle. Essential layering element during tube assembly. In terms of biological role, binds strongly to viral nucleic acids and promotes their packaging. Plays a role in the maturation-stabilization of the viral dimeric RNA via highly structured zinc-binding motifs. The aspartyl protease that mediates proteolytic cleavages of Gag and Gag-Pol polyproteins during or shortly after the release of the virion from the plasma membrane. Cleavages take place as an ordered, step-wise cascade to yield mature proteins. This process is called maturation. Displays maximal activity during the budding process just prior to particle release from the cell. Its function is as follows. Catalyzes viral DNA integration into the host chromosome, by performing a series of DNA cutting and joining reactions. This recombination event is an essential step in the viral replication cycle. Has a strong preference for using the 3'-OH at the viral DNA end as a nucleophile. This chain is Gag-Pol polyprotein (gag-pol), found in Avian leukosis virus subgroup A (isolate RSA) (ALV-A RSA).